The primary structure comprises 1059 residues: Mitogen-activated protein kinase kinase kinase mlk-1 (1059 aa).

A disordered region spans residues 1-66; the sequence is MEQASVPSYV…ESSQVSRESP (66 aa). Positions 38 to 48 are enriched in low complexity; that stretch reads DTTTASTSTDS. The SH3 domain occupies 69 to 130; that stretch reads RASKAFVASY…PSNYAREVTY (62 aa). Positions 150–454 constitute a Protein kinase domain; it reads TLSDCQIGHG…TLAISFKQYA (305 aa). ATP contacts are provided by residues 156–164 and Lys193; that span reads IGHGATATV. A coiled-coil region spans residues 199–224; the sequence is ASNFRADVVSTDEQLEQLKREANLVN. Residue Asp297 is the Proton acceptor of the active site. A Phosphoserine; by max-2 and tpa-1 modification is found at Ser355. 2 disordered regions span residues 617–699 and 714–808; these read PVVS…QTTR and RAQS…SSSD. The span at 623–633 shows a compositional bias: polar residues; it reads MDDSNTFSTID. Basic and acidic residues-rich tracts occupy residues 639–648 and 662–674; these read DPNHSKESKK and NKRDSKEDHDERA. The span at 678 to 689 shows a compositional bias: low complexity; sequence SISSRSSSTTSS. Polar residues predominate over residues 690–699; it reads NRLITGQTTR. Basic and acidic residues predominate over residues 749 to 759; sequence RYVKDLEKDTP. Composition is skewed to polar residues over residues 774-790 and 798-808; these read LDQTIPASPNSPDSINN and SRRTTANSSSD. The short motif at 937-940 is the NPQY motif element; the sequence is NPQY. Tyr940 carries the post-translational modification Phosphotyrosine.

It belongs to the protein kinase superfamily. STE Ser/Thr protein kinase family. MAP kinase kinase kinase subfamily. As to quaternary structure, interacts with max-2; the interaction is independent of max-2 and mlk-1 kinase activities. May interact (via NPQY motif when phosphorylated on tyrosine residue) with shc-1 (via PID domain); the interaction may facilitate mek-1 phosphorylation by bringing mlk-1 and mek-1 together. Interacts with svh-2 (via cytoplasmic domain). Interacts with tpa-1. Requires Mg(2+) as cofactor. May be phosphorylated on tyrosine residues by svh-2. Post-translationally, may be ubiquitinated and targeted for proteasomal degradation by E3 ubiquitin ligase rpm-1. Expressed in pharynx, intestine, hypodermis, neurons and body muscles.

The enzyme catalyses L-seryl-[protein] + ATP = O-phospho-L-seryl-[protein] + ADP + H(+). It carries out the reaction L-threonyl-[protein] + ATP = O-phospho-L-threonyl-[protein] + ADP + H(+). Activated by phosphorylation at Ser-355. May be activated by svh-2-mediated phosphorylation. Functionally, serine/threonine-protein kinase which, by phosphorylating and activating mek-1, plays an important role in the activation of the JNK pathway composed of mlk-1, mek-1 and kgb-1. Involved in the response to environmental stress such as heavy metals. By activating the JNK pathway downstream of tyrosine receptor svh-2, plays a role in axon regeneration after injury. The sequence is that of Mitogen-activated protein kinase kinase kinase mlk-1 from Caenorhabditis elegans.